A 422-amino-acid chain; its full sequence is Ameloblastin (422 aa).

A signal peptide spans 1-26 (MSASKIPLFKMKGLLLFLSLVKMSLA). At Pro42 the chain carries Hydroxyproline. The residue at position 48 (Ser48) is a Phosphoserine. O-linked (GalNAc...) serine glycosylation is present at Ser117. The interval 271 to 321 (GLNQNSPKGGDFTVEVDSPVSVTKGPEKGEGPEGSPLQEASPDKGENPALL) is disordered.

It belongs to the ameloblastin family. As to expression, ameloblast-specific.

The protein localises to the secreted. It localises to the extracellular space. It is found in the extracellular matrix. In terms of biological role, involved in the mineralization and structural organization of enamel. This is Ameloblastin (Ambn) from Rattus norvegicus (Rat).